The following is a 47-amino-acid chain: Large ribosomal subunit protein bL34 (47 aa).

It belongs to the bacterial ribosomal protein bL34 family.

The polypeptide is Large ribosomal subunit protein bL34 (Corynebacterium glutamicum (strain R)).